The primary structure comprises 150 residues: Ribonuclease HI (150 aa).

In terms of domain architecture, RNase H type-1 spans Met-1 to Met-141. Residues Asp-9, Glu-47, Asp-69, and Asp-133 each coordinate Mg(2+).

Belongs to the RNase H family. Monomer. Mg(2+) is required as a cofactor.

The protein resides in the cytoplasm. It carries out the reaction Endonucleolytic cleavage to 5'-phosphomonoester.. Functionally, endonuclease that specifically degrades the RNA of RNA-DNA hybrids. In Xylella fastidiosa (strain 9a5c), this protein is Ribonuclease HI.